A 328-amino-acid polypeptide reads, in one-letter code: UPF0252 protein PF0978 (328 aa).

The helical transmembrane segment at 3 to 23 (VPLLILLFLVLTSGCIAPSTP) threads the bilayer.

This sequence belongs to the UPF0252 family.

It localises to the membrane. The sequence is that of UPF0252 protein PF0978 from Pyrococcus furiosus (strain ATCC 43587 / DSM 3638 / JCM 8422 / Vc1).